We begin with the raw amino-acid sequence, 181 residues long: Large ribosomal subunit protein uL5 (181 aa).

It belongs to the universal ribosomal protein uL5 family. In terms of assembly, part of the 50S ribosomal subunit; part of the 5S rRNA/L5/L18/L25 subcomplex. Contacts the 5S rRNA and the P site tRNA. Forms a bridge to the 30S subunit in the 70S ribosome.

This is one of the proteins that bind and probably mediate the attachment of the 5S RNA into the large ribosomal subunit, where it forms part of the central protuberance. In the 70S ribosome it contacts protein S13 of the 30S subunit (bridge B1b), connecting the 2 subunits; this bridge is implicated in subunit movement. Contacts the P site tRNA; the 5S rRNA and some of its associated proteins might help stabilize positioning of ribosome-bound tRNAs. This is Large ribosomal subunit protein uL5 from Helicobacter pylori (strain ATCC 700392 / 26695) (Campylobacter pylori).